A 154-amino-acid polypeptide reads, in one-letter code: MFFVLESNSNNVLFRIQRIYIKDISFEAPNTPGVFQINWNPKIKVDLNSDAKNIHIDMYEVVLCVTVTAKIEDDTAFLCQVKQAGIFNVSGLNKTQMIRCLKVHCPTILFPYASECVSNQVSRGTFPQLNLDPINFDILFIQSLQKKYNDTLKI.

The protein belongs to the SecB family. As to quaternary structure, homotetramer, a dimer of dimers. One homotetramer interacts with 1 SecA dimer.

Its subcellular location is the cytoplasm. In terms of biological role, one of the proteins required for the normal export of preproteins out of the cell cytoplasm. It is a molecular chaperone that binds to a subset of precursor proteins, maintaining them in a translocation-competent state. It also specifically binds to its receptor SecA. This is Protein-export protein SecB from Blochmanniella pennsylvanica (strain BPEN).